The following is a 265-amino-acid chain: Phosphonoacetaldehyde hydrolase (265 aa).

Asp-9 serves as the catalytic Nucleophile. Mg(2+) is bound by residues Asp-9 and Ala-11. Catalysis depends on Lys-50, which acts as the Schiff-base intermediate with substrate. Asp-184 contacts Mg(2+).

Belongs to the HAD-like hydrolase superfamily. PhnX family. Homodimer. Mg(2+) serves as cofactor.

It carries out the reaction phosphonoacetaldehyde + H2O = acetaldehyde + phosphate + H(+). Involved in phosphonate degradation. The polypeptide is Phosphonoacetaldehyde hydrolase (Lactiplantibacillus plantarum (strain ATCC BAA-793 / NCIMB 8826 / WCFS1) (Lactobacillus plantarum)).